A 362-amino-acid polypeptide reads, in one-letter code: Apelin receptor A (362 aa).

Residues 1 to 34 (MEPTSEYTETYDYYDTGYNDSGCDYSEWEPSYSL) are Extracellular-facing. N-linked (GlcNAc...) asparagine glycosylation is present at Asn-19. 2 disulfides stabilise this stretch: Cys-23–Cys-286 and Cys-105–Cys-184. The helical transmembrane segment at 35 to 55 (IPVLYMLIFILGLSGNGVVIF) threads the bilayer. Topologically, residues 56–73 (TVWRAKSKRRAADVYIGN) are cytoplasmic. Residues 74–94 (LALADLTFVITLPLWAVYTAL) form a helical membrane-spanning segment. The Extracellular portion of the chain corresponds to 95–106 (GYHWPFGVALCK). The helical transmembrane segment at 107 to 127 (ISSYVVLVNMYASVFCLTCLS) threads the bilayer. Topologically, residues 128-149 (FDRYLAIVHSLSSGRLRSRATM) are cytoplasmic. The helical transmembrane segment at 150–170 (LASLGAIWFLSCLLAVPTLLF) threads the bilayer. Residues 171-211 (RTTVDDTGSNRTTCAMDFSLVTLNQDHESLWIAGLSLSSSA) lie on the Extracellular side of the membrane. An N-linked (GlcNAc...) asparagine glycan is attached at Asn-180. A helical membrane pass occupies residues 212–232 (LGFLLPFLAMTVCYCFIGCTV). Residues 233-248 (TRHFSHLRKEDQKKRR) lie on the Cytoplasmic side of the membrane. Residues 249–269 (LLKIITTLVVVFAFCWTPFHV) traverse the membrane as a helical segment. Topologically, residues 270 to 284 (LKSMDALSYLDLAPN) are extracellular. Residues 285-305 (SCGFLHFLLLAHPYATCLAYV) traverse the membrane as a helical segment. Residues 306-362 (NSCLNPFLYAFFDLRFRSQCLCLLNLKKAMHGHMSSMSSTLSAQTQKSEVQSLATKV) are Cytoplasmic-facing.

This sequence belongs to the G-protein coupled receptor 1 family. In terms of tissue distribution, first expressed before epiboly in dorsal precursors. During epiboly, expressed in the enveloping layer, yolk syncytial layer and migrating mesendoderm. During segmentation stages, expressed in epithelial structures such as adaxial cells, border cells of the newly formed somites, developing lens, otic vesicles and venous vasculature.

It localises to the cell membrane. G protein-coupled receptor for peptide hormones apelin (apln) and apelin receptor early endogenous ligand (apela), that plays a role in the regulation of normal cardiovascular function and fluid homeostasis. When acting as apelin receptor, activates both G(i) protein pathway that inhibits adenylate cyclase activity, and the beta-arrestin pathway that promotes internalization of the receptor. Also functions as mechanoreceptor that is activated by pathological stimuli in a G-protein-independent fashion to induce beta-arrestin signaling, hence eliciting cardiac hypertrophy. However, the presence of apelin ligand blunts cardiac hypertrophic induction from APLNR/APJ on response to pathological stimuli. Plays a key role in early development such as gastrulation, blood vessels formation and heart morphogenesis by acting as a receptor for apela hormone, promoting endoderm and mesendoderm cell migration and regulating the migration of cells fated to become myocardial progenitors, respectively. Positively regulates angioblast migration toward the embryonic midline, i.e. the position of the future vessel formation, during vasculogenesis. May promote sinus venosus (SV)-derived endothelial cells migration into the developing heart to promote coronary blood vessel development. Required for cardiovascular development, particularly for intersomitic vein angiogenesis by acting as a receptor for apln hormone. Also plays a role in various processes in adults such as regulation of blood vessel formation, blood pressure, heart contractility, and heart failure. Acts redundantly with agtrl1b in heart development. This chain is Apelin receptor A (aplnra), found in Danio rerio (Zebrafish).